We begin with the raw amino-acid sequence, 955 residues long: Leucine--tRNA ligase (955 aa).

The 'HIGH' region signature appears at 51-61 (PYLNGVLHAGH). The short motif at 647–651 (KLSKS) is the 'KMSKS' region element. Residue lysine 650 participates in ATP binding.

Belongs to the class-I aminoacyl-tRNA synthetase family.

The protein resides in the cytoplasm. The catalysed reaction is tRNA(Leu) + L-leucine + ATP = L-leucyl-tRNA(Leu) + AMP + diphosphate. The protein is Leucine--tRNA ligase of Methanococcus maripaludis (strain C7 / ATCC BAA-1331).